The primary structure comprises 128 residues: Lutropin subunit beta (128 aa).

An N-terminal signal peptide occupies residues 1-20; the sequence is MERLQGLLLWLLLSPSVVWA. 5 disulfides stabilise this stretch: Cys-29–Cys-77, Cys-43–Cys-92, Cys-54–Cys-108, Cys-58–Cys-110, and Cys-113–Cys-120. Asn-33 carries N-linked (GlcNAc...) asparagine glycosylation.

The protein belongs to the glycoprotein hormones subunit beta family. Heterodimer of a common alpha chain and a unique beta chain which confers biological specificity to thyrotropin, lutropin, follitropin and gonadotropin.

Its subcellular location is the secreted. Promotes spermatogenesis and ovulation by stimulating the testes and ovaries to synthesize steroids. The sequence is that of Lutropin subunit beta (LHB) from Phodopus sungorus (Striped hairy-footed hamster).